An 875-amino-acid chain; its full sequence is MYTGNQLRDMFLNFFASKGHRILPSASLIPKDDPTLLLTVAGMVPFKPYFMRKVEPPFPRATTSQKCVRTPDLEVVGKTARHHTFFEMLGNFSFGDYFKAEAIPWAWEFVTEVLKLPIDQLWITVHPEDEEAKNLWIEKTGVSPERIKYDPENLWAAGPVGPCGYCSEIYVDLGESRGCGKPDCALGCDCDRFLEIWNLVFMQYNRDEAGLLTPLPKQNIDTGMGLERIASVMQGAASNFDTDLFLPIINKVAELSGIPYHDSPKNDVAMKVVADHTRAVSFMLSDGIRPGSEGRGYVLRRILRRAIRYARLLGIDKPFLEQIFLIIQKDYSHHYPELKENENFILNHLRLEEKNFQATLEQGTQILQDKVKTLQEAGETMLSGADAFYLYETYGFPVELTEEMLIEQGMSVDMETFNAAAEEHRRLAKEQSQQMKAVQESAAISEKAKALGTTPFLGYHELAAHTKVEALFRDGEEVKDAAEGDEVLIFLRESPFYAESGGQISDSGVIRSLRAEAKLIEVKKGVTGTVYHRFLLTQGVLHTGDEVEALVDEHLRLATARHHSATHLLQAALRAVLGEHVQQAGSLVTPDRLRFDFTHFSALTSAELQRVEDLLNEAVLANMPVAAEEMSLDAAKASGATALFGEKYGDTVRVVSMGDYSLELCGGTHIRATGDIGLVKIISEGGIGAGLRRIEAVAGAEALKYMRSLNDQILDAAQLLKAQPSDLLKRIQGLLVQVKDLEKEVQQLNAKVAKSEVESLLQQVKDVEGVPVLAAKVSAQDMDTLRNTADLLKDKMKDGVLVLGAAVEGKVNWVTVVTPVGLRGLHAGQIIKEVAKITGGGGGGRPDMAQAGGKDAAKLGEALDQVPAIIKSHIK.

His-563, His-567, Cys-665, and His-669 together coordinate Zn(2+).

The protein belongs to the class-II aminoacyl-tRNA synthetase family. The cofactor is Zn(2+).

It localises to the cytoplasm. The enzyme catalyses tRNA(Ala) + L-alanine + ATP = L-alanyl-tRNA(Ala) + AMP + diphosphate. In terms of biological role, catalyzes the attachment of alanine to tRNA(Ala) in a two-step reaction: alanine is first activated by ATP to form Ala-AMP and then transferred to the acceptor end of tRNA(Ala). Also edits incorrectly charged Ser-tRNA(Ala) and Gly-tRNA(Ala) via its editing domain. The protein is Alanine--tRNA ligase of Desulfitobacterium hafniense (strain Y51).